An 80-amino-acid polypeptide reads, in one-letter code: Saposin-B-Val (80 aa).

Positions 1 to 80 (GDVCQDCIQM…CGLVGFCEEV (80 aa)) constitute a Saposin B-type domain. Cystine bridges form between Cys4–Cys77, Cys7–Cys71, and Cys36–Cys47. Residue Asn21 is glycosylated (N-linked (GlcNAc...) (complex) asparagine).

Saposin-B is a homodimer. Interacts with GRN; facilitates lysosomal delivery of progranulin from the extracellular space and the biosynthetic pathway. In terms of processing, the one residue extended Saposin-B-Val is only found in a minority of the chains.

Functionally, saposin-B stimulates the hydrolysis of galacto-cerebroside sulfate by arylsulfatase A (EC 3.1.6.8), GM1 gangliosides by beta-galactosidase (EC 3.2.1.23) and globotriaosylceramide by alpha-galactosidase A (EC 3.2.1.22). Saposin-B forms a solubilizing complex with the substrates of the sphingolipid hydrolases. This chain is Saposin-B-Val (PSAP), found in Sus scrofa (Pig).